Reading from the N-terminus, the 184-residue chain is UPF0149 protein Pmen_0324 (184 aa).

The protein belongs to the UPF0149 family.

This chain is UPF0149 protein Pmen_0324, found in Ectopseudomonas mendocina (strain ymp) (Pseudomonas mendocina).